The chain runs to 70 residues: MALTRGGDPAPSVCLVVWFACVYSLLILVVLLLIYRCCIGFQDDLVSRTLAVYRACIQGPICNQTHNSTS.

A helical transmembrane segment spans residues 14-34 (CLVVWFACVYSLLILVVLLLI).

The protein localises to the virion membrane. This is an uncharacterized protein from Homo sapiens (Human).